Reading from the N-terminus, the 1325-residue chain is Protein PHYTOCHROME-DEPENDENT LATE-FLOWERING (1325 aa).

2 stretches are compositionally biased toward polar residues: residues 313–331 (IGSTRNTQDQGSNSVSVSG) and 504–515 (NFPQTSWNVNPG). Disordered regions lie at residues 313-371 (IGST…MPGL), 462-558 (EPFE…EFSG), 593-616 (ANEAMQQRQHQAQMAAKRRTNSLP), 852-875 (VAGQASGEASKHGNTGNTPNNSTQ), and 1160-1325 (QQQQ…GNNS). The span at 518–529 (IEKEPKKEEQFS) shows a compositional bias: basic and acidic residues. Residues 596-607 (AMQQRQHQAQMA) are compositionally biased toward low complexity. The span at 863–875 (HGNTGNTPNNSTQ) shows a compositional bias: polar residues. The span at 1160–1224 (QQQQQQQLQQ…QQQATASPLQ (65 aa)) shows a compositional bias: low complexity. The span at 1225–1239 (SVLSPPQVGSPSAGI) shows a compositional bias: polar residues. Over residues 1240 to 1262 (TQQQLQQSSPQQMSQRTPMSPQQ) the composition is skewed to low complexity. Polar residues-rich tracts occupy residues 1263–1286 (VNQRTPMSPQISSGAMHPMSTSNL) and 1293–1325 (PQLSSQTMGSVGSITNSPMELQGPKNNSAGNNS).

Component of a red light-dependent nuclear complex made of PHL, PHYB and CO. Interacts directly with PHYB and CO; CO binding requires the presence of PHYB. As to expression, mostly expressed in cotyledons and leaves, both in mesophyll and vasculature cells. Also present in roots, hypocotyls and shoot apices.

Its subcellular location is the nucleus. It localises to the nuclear body. The protein resides in the cytoplasmic granule. It is found in the cytoplasm. Functionally, triggers photoperiod-monitored flowering by repressing PHYB-dependent flowering negative regulation, probably through physical interactions with PHYB and CO. This Arabidopsis thaliana (Mouse-ear cress) protein is Protein PHYTOCHROME-DEPENDENT LATE-FLOWERING.